Consider the following 81-residue polypeptide: Photosystem I iron-sulfur center (81 aa).

2 consecutive 4Fe-4S ferredoxin-type domains span residues 2 to 31 (SHSVKIYDTCIGCTQCVRACPLDVLEMVPW) and 37 to 68 (GQIASSPRTEDCVGCKRCETACPTDFLSVRVY). C11, C14, C17, C21, C48, C51, C54, and C58 together coordinate [4Fe-4S] cluster.

The cyanobacterial PSI reaction center is composed of one copy each of PsaA,B,C,D,E,F,I,J,K,L,M and X, and forms trimeric complexes. It depends on [4Fe-4S] cluster as a cofactor.

The protein resides in the cellular thylakoid membrane. The enzyme catalyses reduced [plastocyanin] + hnu + oxidized [2Fe-2S]-[ferredoxin] = oxidized [plastocyanin] + reduced [2Fe-2S]-[ferredoxin]. Functionally, apoprotein for the two 4Fe-4S centers FA and FB of photosystem I (PSI); essential for photochemical activity. FB is the terminal electron acceptor of PSI, donating electrons to ferredoxin. The C-terminus interacts with PsaA/B/D and helps assemble the protein into the PSI complex. Required for binding of PsaD and PsaE to PSI. PSI is a plastocyanin/cytochrome c6-ferredoxin oxidoreductase, converting photonic excitation into a charge separation, which transfers an electron from the donor P700 chlorophyll pair to the spectroscopically characterized acceptors A0, A1, FX, FA and FB in turn. This chain is Photosystem I iron-sulfur center, found in Prochlorococcus marinus (strain SARG / CCMP1375 / SS120).